A 746-amino-acid polypeptide reads, in one-letter code: Catalase-peroxidase (746 aa).

Over residues 1-20 (MSSDTSSSRPPQPDSGTASK) the composition is skewed to polar residues. Residues 1-42 (MSSDTSSSRPPQPDSGTASKSESENPAIPSPKPKAHAPLTNR) form a disordered region. A cross-link (tryptophyl-tyrosyl-methioninium (Trp-Tyr) (with M-262)) is located at residues 113 to 236 (WHAAGTYRIH…YGATTMGLIY (124 aa)). His-114 functions as the Proton acceptor in the catalytic mechanism. The segment at residues 236-262 (YVNPEGPEGKPDPIAAAIDIRETFGRM) is a cross-link (tryptophyl-tyrosyl-methioninium (Tyr-Met) (with W-113)). His-277 contributes to the heme b binding site.

This sequence belongs to the peroxidase family. Peroxidase/catalase subfamily. Homodimer or homotetramer. Heme b serves as cofactor. Formation of the three residue Trp-Tyr-Met cross-link is important for the catalase, but not the peroxidase activity of the enzyme.

It catalyses the reaction H2O2 + AH2 = A + 2 H2O. It carries out the reaction 2 H2O2 = O2 + 2 H2O. In terms of biological role, bifunctional enzyme with both catalase and broad-spectrum peroxidase activity. May play a role in the intracellular survival of mycobacteria. The sequence is that of Catalase-peroxidase from Mycobacterium intracellulare.